We begin with the raw amino-acid sequence, 232 residues long: Phosphatidylserine decarboxylase proenzyme (232 aa).

The active-site Schiff-base intermediate with substrate; via pyruvic acid is the serine 190. Residue serine 190 is modified to Pyruvic acid (Ser); by autocatalysis.

Belongs to the phosphatidylserine decarboxylase family. PSD-A subfamily. As to quaternary structure, heterodimer of a large membrane-associated beta subunit and a small pyruvoyl-containing alpha subunit. It depends on pyruvate as a cofactor. Is synthesized initially as an inactive proenzyme. Formation of the active enzyme involves a self-maturation process in which the active site pyruvoyl group is generated from an internal serine residue via an autocatalytic post-translational modification. Two non-identical subunits are generated from the proenzyme in this reaction, and the pyruvate is formed at the N-terminus of the alpha chain, which is derived from the carboxyl end of the proenzyme. The post-translation cleavage follows an unusual pathway, termed non-hydrolytic serinolysis, in which the side chain hydroxyl group of the serine supplies its oxygen atom to form the C-terminus of the beta chain, while the remainder of the serine residue undergoes an oxidative deamination to produce ammonia and the pyruvoyl prosthetic group on the alpha chain.

It localises to the cell membrane. It carries out the reaction a 1,2-diacyl-sn-glycero-3-phospho-L-serine + H(+) = a 1,2-diacyl-sn-glycero-3-phosphoethanolamine + CO2. It participates in phospholipid metabolism; phosphatidylethanolamine biosynthesis; phosphatidylethanolamine from CDP-diacylglycerol: step 2/2. Its function is as follows. Catalyzes the formation of phosphatidylethanolamine (PtdEtn) from phosphatidylserine (PtdSer). The chain is Phosphatidylserine decarboxylase proenzyme from Rhodopseudomonas palustris (strain HaA2).